Consider the following 269-residue polypeptide: Formamidopyrimidine-DNA glycosylase (269 aa).

The active-site Schiff-base intermediate with DNA is Pro-2. The Proton donor role is filled by Glu-3. Lys-57 acts as the Proton donor; for beta-elimination activity in catalysis. DNA is bound by residues His-90, Arg-109, and Lys-150. The FPG-type zinc finger occupies 235–269 (QVYGRKGEPCRVCGTPIVATKHAQRATFYCRQCQK). Arg-259 (proton donor; for delta-elimination activity) is an active-site residue.

It belongs to the FPG family. In terms of assembly, monomer. The cofactor is Zn(2+).

It carries out the reaction Hydrolysis of DNA containing ring-opened 7-methylguanine residues, releasing 2,6-diamino-4-hydroxy-5-(N-methyl)formamidopyrimidine.. The catalysed reaction is 2'-deoxyribonucleotide-(2'-deoxyribose 5'-phosphate)-2'-deoxyribonucleotide-DNA = a 3'-end 2'-deoxyribonucleotide-(2,3-dehydro-2,3-deoxyribose 5'-phosphate)-DNA + a 5'-end 5'-phospho-2'-deoxyribonucleoside-DNA + H(+). In terms of biological role, involved in base excision repair of DNA damaged by oxidation or by mutagenic agents. Acts as a DNA glycosylase that recognizes and removes damaged bases. Has a preference for oxidized purines, such as 7,8-dihydro-8-oxoguanine (8-oxoG). Has AP (apurinic/apyrimidinic) lyase activity and introduces nicks in the DNA strand. Cleaves the DNA backbone by beta-delta elimination to generate a single-strand break at the site of the removed base with both 3'- and 5'-phosphates. This is Formamidopyrimidine-DNA glycosylase from Escherichia coli O7:K1 (strain IAI39 / ExPEC).